We begin with the raw amino-acid sequence, 86 residues long: Large ribosomal subunit protein bL27 (86 aa).

A compositionally biased stretch (gly residues) spans 1–10 (MAQKKGGGST). Residues 1-21 (MAQKKGGGSTRNGRDSESKRL) are disordered.

The protein belongs to the bacterial ribosomal protein bL27 family.

This Bordetella petrii (strain ATCC BAA-461 / DSM 12804 / CCUG 43448) protein is Large ribosomal subunit protein bL27.